The chain runs to 251 residues: Ditrans,polycis-undecaprenyl-diphosphate synthase ((2E,6E)-farnesyl-diphosphate specific) (251 aa).

Aspartate 21 is an active-site residue. Aspartate 21 provides a ligand contact to Mg(2+). Substrate is bound by residues 22-25 (GNNR), tryptophan 26, histidine 38, and 66-68 (SSE). The Proton acceptor role is filled by asparagine 69. Residues tryptophan 70, arginine 72, arginine 189, and 195 to 197 (RIS) contribute to the substrate site. Glutamate 208 lines the Mg(2+) pocket.

It belongs to the UPP synthase family. Homodimer. The cofactor is Mg(2+).

The enzyme catalyses 8 isopentenyl diphosphate + (2E,6E)-farnesyl diphosphate = di-trans,octa-cis-undecaprenyl diphosphate + 8 diphosphate. Functionally, catalyzes the sequential condensation of isopentenyl diphosphate (IPP) with (2E,6E)-farnesyl diphosphate (E,E-FPP) to yield (2Z,6Z,10Z,14Z,18Z,22Z,26Z,30Z,34E,38E)-undecaprenyl diphosphate (di-trans,octa-cis-UPP). UPP is the precursor of glycosyl carrier lipid in the biosynthesis of bacterial cell wall polysaccharide components such as peptidoglycan and lipopolysaccharide. This Pseudomonas putida (strain ATCC 47054 / DSM 6125 / CFBP 8728 / NCIMB 11950 / KT2440) protein is Ditrans,polycis-undecaprenyl-diphosphate synthase ((2E,6E)-farnesyl-diphosphate specific).